A 214-amino-acid polypeptide reads, in one-letter code: Large ribosomal subunit protein uL16-like (214 aa).

It belongs to the universal ribosomal protein uL16 family. As to quaternary structure, component of a male germ cell-specific 60S large ribosomal subunit (LSU), which contains RPL10L and RPL39L, instead of RPL10 and RPL39 paralogs. The composition of the rest of the complex is similar to classical ribosomes. In terms of tissue distribution, testis-specific.

The protein localises to the cytoplasm. Its function is as follows. Testis-specific component of the ribosome, which is required for the transition from prophase to metaphase in male meiosis I. Compensates for the inactivated X-linked RPL10 paralog during spermatogenesis. The ribosome is a large ribonucleoprotein complex responsible for the synthesis of proteins in the cell. The male germ cell-specific ribosome displays a ribosomal polypeptide exit tunnel of distinct size and charge states compared with the classical ribosome. It is responsible for regulating the biosynthesis and folding of a subset of male germ-cell-specific proteins that are essential for the formation of sperm. This is Large ribosomal subunit protein uL16-like from Mus musculus (Mouse).